Consider the following 408-residue polypeptide: NADH-quinone oxidoreductase subunit D (408 aa).

Belongs to the complex I 49 kDa subunit family. NDH-1 is composed of 14 different subunits. Subunits NuoB, C, D, E, F, and G constitute the peripheral sector of the complex.

The protein resides in the cell inner membrane. It carries out the reaction a quinone + NADH + 5 H(+)(in) = a quinol + NAD(+) + 4 H(+)(out). Its function is as follows. NDH-1 shuttles electrons from NADH, via FMN and iron-sulfur (Fe-S) centers, to quinones in the respiratory chain. The immediate electron acceptor for the enzyme in this species is believed to be ubiquinone. Couples the redox reaction to proton translocation (for every two electrons transferred, four hydrogen ions are translocated across the cytoplasmic membrane), and thus conserves the redox energy in a proton gradient. The protein is NADH-quinone oxidoreductase subunit D of Campylobacter hominis (strain ATCC BAA-381 / DSM 21671 / CCUG 45161 / LMG 19568 / NCTC 13146 / CH001A).